Consider the following 187-residue polypeptide: Protein GrpE (187 aa).

The segment covering 1–11 (MTDSSNEHETE) has biased composition (basic and acidic residues). Positions 1–23 (MTDSSNEHETENPSVPNPDNEIQ) are disordered.

Belongs to the GrpE family. In terms of assembly, homodimer.

The protein resides in the cytoplasm. Functionally, participates actively in the response to hyperosmotic and heat shock by preventing the aggregation of stress-denatured proteins, in association with DnaK and GrpE. It is the nucleotide exchange factor for DnaK and may function as a thermosensor. Unfolded proteins bind initially to DnaJ; upon interaction with the DnaJ-bound protein, DnaK hydrolyzes its bound ATP, resulting in the formation of a stable complex. GrpE releases ADP from DnaK; ATP binding to DnaK triggers the release of the substrate protein, thus completing the reaction cycle. Several rounds of ATP-dependent interactions between DnaJ, DnaK and GrpE are required for fully efficient folding. The chain is Protein GrpE from Chlamydia felis (strain Fe/C-56) (Chlamydophila felis).